Reading from the N-terminus, the 232-residue chain is 7-cyano-7-deazaguanine synthase (232 aa).

8-18 (FSGGQDSTTCL) lines the ATP pocket. The Zn(2+) site is built by cysteine 189, cysteine 198, cysteine 201, and cysteine 204.

It belongs to the QueC family. Zn(2+) is required as a cofactor.

It carries out the reaction 7-carboxy-7-deazaguanine + NH4(+) + ATP = 7-cyano-7-deazaguanine + ADP + phosphate + H2O + H(+). It functions in the pathway purine metabolism; 7-cyano-7-deazaguanine biosynthesis. Catalyzes the ATP-dependent conversion of 7-carboxy-7-deazaguanine (CDG) to 7-cyano-7-deazaguanine (preQ(0)). The chain is 7-cyano-7-deazaguanine synthase from Yersinia enterocolitica serotype O:8 / biotype 1B (strain NCTC 13174 / 8081).